Consider the following 98-residue polypeptide: UPF0358 protein LCA_1078 (98 aa).

The protein belongs to the UPF0358 family.

The sequence is that of UPF0358 protein LCA_1078 from Latilactobacillus sakei subsp. sakei (strain 23K) (Lactobacillus sakei subsp. sakei).